The chain runs to 451 residues: MSELRGSWDEQQQSMAYLPDADMDTVAASTSLPDPAGDFDRNVPRICGVCGDRATGFHFNAMTCEGCKGFFRRSMKRKAMFTCPFNGDCKITKDNRRHCQACRLKRCVDIGMMKEFILTDEEVQRKREMILKRKEEEALKESLKPKLSEEQQKVIDTLLEAHHKTFDTTYSDFNKFRPPVRSKFSSRMATHSSSVVSQDFSSEDSNDVFGSDAFAAFPEPMEPQMFSNLDLSEESDESPSMNIELPHLPMLPHLADLVSYSIQKVIGFAKMIPGFRDLTAEDQIALLKSSAIEVIMLRSNQSFTMEDMSWTCGSNDFKYKVSDVTQAGHSMDLLEPLVKFQVGLKKLNLHEEEHVLLMAICILSPDRPGVQDTSLVESIQDRLSDILQTYIRCRHPPPGSRLLYAKMIQKLADLRSLNEEHSKQYRCLSFQPEHSMQLTPLVLEVFGNEIS.

Residues 44–112 (PRICGVCGDR…RLKRCVDIGM (69 aa)) constitute a DNA-binding region (nuclear receptor). Zn(2+) is bound by residues cysteine 47, cysteine 50, cysteine 64, cysteine 67, cysteine 83, cysteine 89, cysteine 99, and cysteine 102. NR C4-type zinc fingers lie at residues 47–67 (CGVC…CEGC) and 83–107 (CPFN…LKRC). Hinge stretches follow at residues 113 to 149 (MKEF…KLSE) and 120 to 149 (DEEV…KLSE). The NR LBD domain maps to 150 to 447 (EQQKVIDTLL…LTPLVLEVFG (298 aa)). Serine 261 is a binding site for calcitriol. The interval 270–288 (KMIPGFRDLTAEDQIALLK) is interaction with coactivator LXXLL motif. Calcitriol contacts are provided by arginine 298, serine 302, histidine 329, and histidine 421. Positions 440–448 (PLVLEVFGN) match the 9aaTAD motif.

This sequence belongs to the nuclear hormone receptor family. NR1 subfamily. In terms of assembly, homodimer in the absence of bound vitamin D3. Heterodimer with RXRA after vitamin D3 binding. As to expression, expressed in kidney and intestine.

The protein resides in the nucleus. It is found in the cytoplasm. Its function is as follows. Nuclear receptor for calcitriol, the active form of vitamin D3 which mediates the action of this vitamin on cells. Enters the nucleus upon vitamin D3 binding where it forms heterodimers with the retinoid X receptor/RXR. The VDR-RXR heterodimers bind to specific response elements on DNA and activate the transcription of vitamin D3-responsive target genes. Plays a central role in calcium homeostasis. Also functions as a receptor for the secondary bile acid lithocholic acid (LCA) and its metabolites. This chain is Vitamin D3 receptor (VDR), found in Gallus gallus (Chicken).